We begin with the raw amino-acid sequence, 161 residues long: Pleiotrophin-A (161 aa).

The N-terminal stretch at 1–23 (MRHQHGLFMLALLAFLFVITVLG) is a signal peptide. 5 cysteine pairs are disulfide-bonded: Cys41–Cys70, Cys49–Cys79, Cys56–Cys83, Cys93–Cys125, and Cys103–Cys135. Chondroitin sulfate binding regions lie at residues 86 to 93 (KKQFGAEC) and 117 to 125 (KRALHNAEC). The interval 136 to 161 (GKVTKPKLQESKKKKKEGKNKEKLLD) is disordered. The chondroitin sulfate A binding stretch occupies residues 141–161 (PKLQESKKKKKEGKNKEKLLD).

This sequence belongs to the pleiotrophin family. In terms of tissue distribution, expressed in high levels in brain and eye. Lower levels in bone. In the tailbud embryo stage, it is expressed exclusively in the central nervous system, especially in the hind region of the brain.

It is found in the secreted. Functionally, secreted growth factor that mediates its signal through cell-surface proteoglycan and non-proteoglycan receptors. Binds cell-surface proteoglycan receptor via their chondroitin sulfate (CS) groups. Thereby regulates many processes like cell proliferation, cell survival, cell growth, cell differentiation and cell migration. Has antibacterial activity against both Gram-positive and Gram-negative bacteria. This Xenopus laevis (African clawed frog) protein is Pleiotrophin-A (ptn-a).